We begin with the raw amino-acid sequence, 53 residues long: Rubredoxin (53 aa).

A Rubredoxin-like domain is found at 1 to 53 (MQKYVCDICGYVYDPAVGDPDNGVAPGTAFADLPEDWVCPECGVSKDEFSPEA). Fe cation is bound by residues Cys6, Cys9, Cys39, and Cys42.

Belongs to the rubredoxin family. Fe(3+) is required as a cofactor.

Its function is as follows. Rubredoxin is a small nonheme, iron protein lacking acid-labile sulfide. Its single Fe, chelated to 4 Cys, functions as an electron acceptor and may also stabilize the conformation of the molecule. The sequence is that of Rubredoxin from Butyribacterium methylotrophicum.